A 476-amino-acid polypeptide reads, in one-letter code: Siroheme synthase (476 aa).

The precorrin-2 dehydrogenase /sirohydrochlorin ferrochelatase stretch occupies residues 1–207 (MTANALFPLF…QRHAEAEAVL (207 aa)). Residues 25 to 26 (KV) and 46 to 47 (PS) contribute to the NAD(+) site. Ser-132 is modified (phosphoserine). The interval 220-476 (GSVTLVGAGA…SAPCPPARIL (257 aa)) is uroporphyrinogen-III C-methyltransferase. Asp-252 acts as the Proton acceptor in catalysis. The active-site Proton donor is Lys-274. Residues 305–307 (GGD), Val-310, 335–336 (TA), Met-387, and Gly-416 contribute to the S-adenosyl-L-methionine site.

The protein in the N-terminal section; belongs to the precorrin-2 dehydrogenase / sirohydrochlorin ferrochelatase family. In the C-terminal section; belongs to the precorrin methyltransferase family.

The catalysed reaction is uroporphyrinogen III + 2 S-adenosyl-L-methionine = precorrin-2 + 2 S-adenosyl-L-homocysteine + H(+). It catalyses the reaction precorrin-2 + NAD(+) = sirohydrochlorin + NADH + 2 H(+). It carries out the reaction siroheme + 2 H(+) = sirohydrochlorin + Fe(2+). It functions in the pathway cofactor biosynthesis; adenosylcobalamin biosynthesis; precorrin-2 from uroporphyrinogen III: step 1/1. The protein operates within cofactor biosynthesis; adenosylcobalamin biosynthesis; sirohydrochlorin from precorrin-2: step 1/1. It participates in porphyrin-containing compound metabolism; siroheme biosynthesis; precorrin-2 from uroporphyrinogen III: step 1/1. Its pathway is porphyrin-containing compound metabolism; siroheme biosynthesis; siroheme from sirohydrochlorin: step 1/1. It functions in the pathway porphyrin-containing compound metabolism; siroheme biosynthesis; sirohydrochlorin from precorrin-2: step 1/1. Multifunctional enzyme that catalyzes the SAM-dependent methylations of uroporphyrinogen III at position C-2 and C-7 to form precorrin-2 via precorrin-1. Then it catalyzes the NAD-dependent ring dehydrogenation of precorrin-2 to yield sirohydrochlorin. Finally, it catalyzes the ferrochelation of sirohydrochlorin to yield siroheme. The sequence is that of Siroheme synthase from Xylella fastidiosa (strain M12).